Here is a 99-residue protein sequence, read N- to C-terminus: Large ribosomal subunit protein uL23 (99 aa).

The protein belongs to the universal ribosomal protein uL23 family. As to quaternary structure, part of the 50S ribosomal subunit. Contacts protein L29, and trigger factor when it is bound to the ribosome.

Functionally, one of the early assembly proteins it binds 23S rRNA. One of the proteins that surrounds the polypeptide exit tunnel on the outside of the ribosome. Forms the main docking site for trigger factor binding to the ribosome. This is Large ribosomal subunit protein uL23 from Shewanella loihica (strain ATCC BAA-1088 / PV-4).